We begin with the raw amino-acid sequence, 301 residues long: Homoserine O-acetyltransferase (301 aa).

The active-site Acyl-thioester intermediate is the Cys-142. Residues Lys-163 and Ser-192 each coordinate substrate. His-235 (proton acceptor) is an active-site residue. Glu-237 is an active-site residue. Arg-249 lines the substrate pocket.

This sequence belongs to the MetA family.

The protein localises to the cytoplasm. It carries out the reaction L-homoserine + acetyl-CoA = O-acetyl-L-homoserine + CoA. The protein operates within amino-acid biosynthesis; L-methionine biosynthesis via de novo pathway; O-acetyl-L-homoserine from L-homoserine: step 1/1. In terms of biological role, transfers an acetyl group from acetyl-CoA to L-homoserine, forming acetyl-L-homoserine. The sequence is that of Homoserine O-acetyltransferase from Bacillus cereus (strain AH187).